Reading from the N-terminus, the 170-residue chain is CFA/I fimbrial subunit B (170 aa).

A signal peptide spans 1-23 (MKFKKTIGAMALTTMFVAVSASA).

Belongs to the fimbrial CS1 protein family. In terms of assembly, CFA/I fimbriae are rather rigid, thread-like filaments of 0.5-1 micrometer, with an apparent axial hole, and a diameter of 7 nanometers. A single CFA/I fimbria consists of about 100 identical protein subunits.

It is found in the fimbrium. Fimbriae (also called pili), polar filaments radiating from the surface of the bacterium to a length of 0.5-1.5 micrometers and numbering 100-300 per cell, enable bacteria to colonize the epithelium of specific host organs. The protein is CFA/I fimbrial subunit B (cfaB) of Escherichia coli.